The following is a 115-amino-acid chain: NADH-ubiquinone oxidoreductase chain 3 (115 aa).

Transmembrane regions (helical) follow at residues 3–23 (LMAT…IAFW), 55–75 (FFLV…LLPL), and 86–106 (LTLL…AYEW).

The protein belongs to the complex I subunit 3 family. Core subunit of respiratory chain NADH dehydrogenase (Complex I) which is composed of 45 different subunits. Interacts with TMEM186. Interacts with TMEM242.

It localises to the mitochondrion inner membrane. The catalysed reaction is a ubiquinone + NADH + 5 H(+)(in) = a ubiquinol + NAD(+) + 4 H(+)(out). Core subunit of the mitochondrial membrane respiratory chain NADH dehydrogenase (Complex I) which catalyzes electron transfer from NADH through the respiratory chain, using ubiquinone as an electron acceptor. Essential for the catalytic activity of complex I. The chain is NADH-ubiquinone oxidoreductase chain 3 from Mammuthus primigenius (Siberian woolly mammoth).